Here is a 68-residue protein sequence, read N- to C-terminus: Large ribosomal subunit protein uL29 (68 aa).

The protein belongs to the universal ribosomal protein uL29 family.

This is Large ribosomal subunit protein uL29 from Rhodopseudomonas palustris (strain BisB18).